Consider the following 179-residue polypeptide: Inosine/xanthosine triphosphatase (179 aa).

Substrate-binding positions include 8 to 13 (TTNPAK) and 68 to 69 (EA). Mg(2+) is bound at residue Glu-68.

Belongs to the YjjX NTPase family. In terms of assembly, homodimer. The cofactor is Mg(2+). Mn(2+) is required as a cofactor.

It carries out the reaction XTP + H2O = XDP + phosphate + H(+). The enzyme catalyses ITP + H2O = IDP + phosphate + H(+). In terms of biological role, phosphatase that hydrolyzes non-canonical purine nucleotides such as XTP and ITP to their respective diphosphate derivatives. Probably excludes non-canonical purines from DNA/RNA precursor pool, thus preventing their incorporation into DNA/RNA and avoiding chromosomal lesions. The protein is Inosine/xanthosine triphosphatase of Serratia proteamaculans (strain 568).